The chain runs to 161 residues: 2-C-methyl-D-erythritol 2,4-cyclodiphosphate synthase (161 aa).

Residues D11 and H13 each coordinate a divalent metal cation. 4-CDP-2-C-methyl-D-erythritol 2-phosphate-binding positions include 11-13 (DIH) and 37-38 (HS). H45 serves as a coordination point for a divalent metal cation. Residues 59–61 (DIG) and 135–138 (TTNE) contribute to the 4-CDP-2-C-methyl-D-erythritol 2-phosphate site.

It belongs to the IspF family. As to quaternary structure, homotrimer. Requires a divalent metal cation as cofactor.

It catalyses the reaction 4-CDP-2-C-methyl-D-erythritol 2-phosphate = 2-C-methyl-D-erythritol 2,4-cyclic diphosphate + CMP. The protein operates within isoprenoid biosynthesis; isopentenyl diphosphate biosynthesis via DXP pathway; isopentenyl diphosphate from 1-deoxy-D-xylulose 5-phosphate: step 4/6. Its function is as follows. Involved in the biosynthesis of isopentenyl diphosphate (IPP) and dimethylallyl diphosphate (DMAPP), two major building blocks of isoprenoid compounds. Catalyzes the conversion of 4-diphosphocytidyl-2-C-methyl-D-erythritol 2-phosphate (CDP-ME2P) to 2-C-methyl-D-erythritol 2,4-cyclodiphosphate (ME-CPP) with a corresponding release of cytidine 5-monophosphate (CMP). The protein is 2-C-methyl-D-erythritol 2,4-cyclodiphosphate synthase of Acaryochloris marina (strain MBIC 11017).